The following is a 470-amino-acid chain: Calmodulin-binding receptor-like cytoplasmic kinase 1 (470 aa).

2 disordered regions span residues 1 to 29 and 65 to 128; these read MPMRSKTPTPLRFSNGKHQRDDSEYSWTD and PTEC…SKSW. The segment covering 65 to 82 has biased composition (basic and acidic residues); that stretch reads PTECRSDPGESSTHDRES. Composition is skewed to polar residues over residues 83–98 and 108–121; these read TLSGWTGYSSPSSFGR and YRFSGSRFQSPGKD. Residues 147–423 enclose the Protein kinase domain; that stretch reads FSSVHQIGEG…MKGIAEKLWA (277 aa). ATP-binding positions include 153 to 161 and K175; that span reads IGEGGFGTV. Positions 162–185 are caM-binding; that stretch reads FKGKLDDGTIVAIKRARKNNYGKS. Residue D273 is the Proton acceptor of the active site. Phosphoserine is present on residues S277 and S308. At T309 the chain carries Phosphothreonine. A Phosphotyrosine modification is found at Y322.

This sequence belongs to the protein kinase superfamily. Ser/Thr protein kinase family. As to quaternary structure, interacts with calmodulin (CaM) in a Ca(2+)-dependent manner. Mg(2+) serves as cofactor. Autophosphorylated.

It localises to the cytoplasm. It carries out the reaction L-seryl-[protein] + ATP = O-phospho-L-seryl-[protein] + ADP + H(+). It catalyses the reaction L-threonyl-[protein] + ATP = O-phospho-L-threonyl-[protein] + ADP + H(+). Up-regulated by Ca(2+)/CaM. The polypeptide is Calmodulin-binding receptor-like cytoplasmic kinase 1 (CRCK1) (Arabidopsis thaliana (Mouse-ear cress)).